The chain runs to 307 residues: Methionyl-tRNA formyltransferase (307 aa).

108-111 serves as a coordination point for (6S)-5,6,7,8-tetrahydrofolate; the sequence is SLLP.

Belongs to the Fmt family.

The enzyme catalyses L-methionyl-tRNA(fMet) + (6R)-10-formyltetrahydrofolate = N-formyl-L-methionyl-tRNA(fMet) + (6S)-5,6,7,8-tetrahydrofolate + H(+). Functionally, attaches a formyl group to the free amino group of methionyl-tRNA(fMet). The formyl group appears to play a dual role in the initiator identity of N-formylmethionyl-tRNA by promoting its recognition by IF2 and preventing the misappropriation of this tRNA by the elongation apparatus. In Xanthomonas campestris pv. campestris (strain 8004), this protein is Methionyl-tRNA formyltransferase.